Here is a 440-residue protein sequence, read N- to C-terminus: Phosphatidylcholine-sterol acyltransferase (440 aa).

Positions 1–24 are cleaved as a signal peptide; the sequence is MGPPGSPWQWVLLLLGLLLPPAAP. Asn44 carries an N-linked (GlcNAc...) asparagine glycan. Cys74 and Cys98 are oxidised to a cystine. An N-linked (GlcNAc...) asparagine glycan is attached at Asn108. The active-site Nucleophile is Ser205. Residue Asn296 is glycosylated (N-linked (GlcNAc...) asparagine). Cys337 and Cys380 form a disulfide bridge. Residues Asp369 and His401 each act as charge relay system in the active site. Asn408 carries an N-linked (GlcNAc...) asparagine glycan.

It belongs to the AB hydrolase superfamily. Lipase family. As to expression, detected in blood plasma (at protein level). Highly expressed in liver.

It is found in the secreted. The enzyme catalyses a sterol + a 1,2-diacyl-sn-glycero-3-phosphocholine = a sterol ester + a 1-acyl-sn-glycero-3-phosphocholine. It carries out the reaction a 1-O-alkyl-2-acetyl-sn-glycero-3-phosphocholine + H2O = a 1-O-alkyl-sn-glycero-3-phosphocholine + acetate + H(+). It catalyses the reaction a 1-hexadecanoyl-2-acyl-sn-glycero-3-phosphocholine + (24S)-hydroxycholesterol = (24S)-24-hydroxycholesterol ester + 1-hexadecanoyl-sn-glycero-3-phosphocholine. The catalysed reaction is (24S)-hydroxycholesterol + 1-hexadecanoyl-2-(9Z,12Z-octadecadienoyl)-sn-glycero-3-phosphocholine = (24S)-hydroxycholesterol 3-linoleoate + 1-hexadecanoyl-sn-glycero-3-phosphocholine. The enzyme catalyses 1-hexadecanoyl-2-(5Z,8Z,11Z,14Z-eicosatetraenoyl)-sn-glycero-3-phosphocholine + cholesterol = cholesteryl (5Z,8Z,11Z,14Z)-eicosatetraenoate + 1-hexadecanoyl-sn-glycero-3-phosphocholine. It carries out the reaction 1-hexadecanoyl-2-(9Z-octadecenoyl)-sn-glycero-3-phosphocholine + cholesterol = cholesteryl (9Z-octadecenoate) + 1-hexadecanoyl-sn-glycero-3-phosphocholine. It catalyses the reaction 1-hexadecanoyl-2-(8Z,11Z,14Z-eicosatrienoyl)-sn-glycero-3-phosphocholine + cholesterol = cholesteryl (8Z,11Z,14Z)-eicosatrienoate + 1-hexadecanoyl-sn-glycero-3-phosphocholine. The catalysed reaction is 1-hexadecanoyl-2-(5Z,8Z,11Z-eicosatrienoyl)-sn-glycero-3-phosphocholine + cholesterol = cholesteryl (5Z,8Z,11Z)-eicosatrienoate + 1-hexadecanoyl-sn-glycero-3-phosphocholine. The enzyme catalyses 1-hexadecanoyl-2-(5Z,8Z,11Z,14Z,17Z-eicosapentaenoyl)-sn-glycero-3-phosphocholine + cholesterol = (5Z,8Z,11Z,14Z,17Z-eicosapentaenoyl)-cholesterol + 1-hexadecanoyl-sn-glycero-3-phosphocholine. It carries out the reaction 1-hexadecanoyl-2-(9Z,12Z-octadecadienoyl)-sn-glycero-3-phosphocholine + cholesterol = cholesteryl (9Z,12Z)-octadecadienoate + 1-hexadecanoyl-sn-glycero-3-phosphocholine. It catalyses the reaction 1-hexadecanoyl-2-(6Z,9Z,12Z-octadecatrienoyl)-sn-glycero-3-phosphocholine + cholesterol = (6Z,9Z,12Z-octadecatrienoyl)-cholesterol + 1-hexadecanoyl-sn-glycero-3-phosphocholine. The catalysed reaction is 1-hexadecanoyl-2-(11Z,14Z,17Z-eicosatrienoyl)-sn-glycero-3-phosphocholine + cholesterol = (11Z,14Z,17Z-eicosatrienoyl)-cholesterol + 1-hexadecanoyl-sn-glycero-3-phosphocholine. The enzyme catalyses 1-hexadecanoyl-2-(9Z,12Z,15Z-octadecatrienoyl)-sn-glycero-3-phosphocholine + cholesterol = (9Z,12Z,15Z-octadecatrienoyl)-cholesterol + 1-hexadecanoyl-sn-glycero-3-phosphocholine. It carries out the reaction 1-hexadecanoyl-2-(9Z,12Z-octadecadienoyl)-sn-glycero-3-phosphocholine + H2O = (9Z,12Z)-octadecadienoate + 1-hexadecanoyl-sn-glycero-3-phosphocholine + H(+). It catalyses the reaction 1-hexadecanoyl-2-(5Z,8Z,11Z,14Z-eicosatetraenoyl)-sn-glycero-3-phosphocholine + H2O = 1-hexadecanoyl-sn-glycero-3-phosphocholine + (5Z,8Z,11Z,14Z)-eicosatetraenoate + H(+). The catalysed reaction is a 1-O-alkyl-2-acetyl-sn-glycero-3-phosphocholine + 1-hexadecanoyl-sn-glycero-3-phosphocholine = 1-hexadecanoyl-2-acetyl-sn-glycero-3-phosphocholine + a 1-O-alkyl-sn-glycero-3-phosphocholine. In terms of biological role, central enzyme in the extracellular metabolism of plasma lipoproteins. Synthesized mainly in the liver and secreted into plasma where it converts cholesterol and phosphatidylcholines (lecithins) to cholesteryl esters and lysophosphatidylcholines on the surface of high and low density lipoproteins (HDLs and LDLs). The cholesterol ester is then transported back to the liver. Also produced in the brain by primary astrocytes, and esterifies free cholesterol on nascent APOE-containing lipoproteins secreted from glia and influences cerebral spinal fluid (CSF) APOE- and APOA1 levels. Together with APOE and the cholesterol transporter ABCA1, plays a key role in the maturation of glial-derived, nascent lipoproteins. Required for remodeling high-density lipoprotein particles into their spherical forms. Has a preference for plasma 16:0-18:2 or 18:O-18:2 phosphatidylcholines. Catalyzes the hydrolysis of 1-O-alkyl-2-acetyl-sn-glycero-3-phosphocholine (platelet-activating factor or PAF) to 1-O-alkyl-sn-glycero-3-phosphocholine (lyso-PAF). Also catalyzes the transfer of the acetate group from PAF to 1-hexadecanoyl-sn-glycero-3-phosphocholine forming lyso-PAF. Catalyzes the esterification of (24S)-hydroxycholesterol (24(S)OH-C), also known as cerebrosterol to produce 24(S)OH-C monoesters. The chain is Phosphatidylcholine-sterol acyltransferase (LCAT) from Oryctolagus cuniculus (Rabbit).